The chain runs to 580 residues: DNA ligase B (580 aa).

Catalysis depends on lysine 135, which acts as the N6-AMP-lysine intermediate.

The protein belongs to the NAD-dependent DNA ligase family. LigB subfamily.

It catalyses the reaction NAD(+) + (deoxyribonucleotide)n-3'-hydroxyl + 5'-phospho-(deoxyribonucleotide)m = (deoxyribonucleotide)n+m + AMP + beta-nicotinamide D-nucleotide.. Catalyzes the formation of phosphodiester linkages between 5'-phosphoryl and 3'-hydroxyl groups in double-stranded DNA using NAD as a coenzyme and as the energy source for the reaction. This chain is DNA ligase B, found in Photorhabdus laumondii subsp. laumondii (strain DSM 15139 / CIP 105565 / TT01) (Photorhabdus luminescens subsp. laumondii).